The following is a 368-amino-acid chain: Biglycan (368 aa).

Positions 1 to 16 are cleaved as a signal peptide; it reads MWPLWRLVSLLALSQA. The propeptide occupies 17 to 37; the sequence is LPFEQRGFWDFTLDDGPFMMN. O-linked (Xyl...) (glycosaminoglycan) serine glycans are attached at residues Ser42 and Ser47. 2 disulfides stabilise this stretch: Cys63-Cys69 and Cys67-Cys76. LRR repeat units lie at residues 82-102, 103-126, 127-150, 151-171, 172-195, 196-220, 221-241, 242-265, 266-289, 290-312, 313-342, and 343-368; these read KSVP…NNDI, SELR…NNKI, SKIH…KNHL, VEIP…DNRI, RKVP…GNPL, ENSG…EAKL, TGIP…HNKI, QAIE…HNQI, RMIE…NNKL, ARVP…SNNI, TKVG…NNPV, and PYWE…NYKK. Residues Ser180 and Ser198 are each glycosylated (O-linked (Xyl...) (glycosaminoglycan) serine). N-linked (GlcNAc...) asparagine glycans are attached at residues Asn270 and Asn311. Cysteines 321 and 354 form a disulfide.

The protein belongs to the small leucine-rich proteoglycan (SLRP) family. SLRP class I subfamily. In terms of assembly, homodimer. Forms a ternary complex with MFAP2 and ELN. Post-translationally, the two attached glycosaminoglycan chains can be either chondroitin sulfate or dermatan sulfate. As to expression, detected in placenta (at protein level). Found in several connective tissues, especially in articular cartilages.

Its subcellular location is the secreted. The protein resides in the extracellular space. It is found in the extracellular matrix. Functionally, may be involved in collagen fiber assembly. The polypeptide is Biglycan (BGN) (Homo sapiens (Human)).